A 357-amino-acid chain; its full sequence is MDLYGVLKPLFRFMTPEQAHHLSIRVLKSGLVPDLSGGPDDPVLATRVWGLDFPNPVGLAAGFDKHCEVADALFRFGFGFVEAGTVTPRPQPGNPLPRLFRLDEDEAVINRFGFNSEGLAPFVFRLGQRRASGKHGIVGANVGKNKESEDALEDYGAGVSATCRLADYLVCNISSPNTPGLRALQARAEMETLLAHVISVRNASMPDPAARTPLLVKVAPDLDDAALADVAEASLATGVDGIIMGNTTLSRPASLQSKFKDETGGLSGKPLLALSTERLGALYRLVGGRLPIIGVGGIASGADAYAKVRAGASLVQIYSALVFHGPGLVTRIKTDLAARLKADGFASIADAVGVDVR.

FMN contacts are provided by residues 61–65 (AGFDK) and T85. Residue K65 participates in substrate binding. 110-114 (NRFGF) serves as a coordination point for substrate. N141 and N172 together coordinate FMN. N172 lines the substrate pocket. S175 serves as the catalytic Nucleophile. Residue N177 participates in substrate binding. FMN-binding residues include K217 and G245. Residue 246-247 (NT) participates in substrate binding. FMN-binding positions include G268, G297, and 318-319 (YS).

Belongs to the dihydroorotate dehydrogenase family. Type 2 subfamily. In terms of assembly, monomer. It depends on FMN as a cofactor.

Its subcellular location is the cell membrane. It catalyses the reaction (S)-dihydroorotate + a quinone = orotate + a quinol. It participates in pyrimidine metabolism; UMP biosynthesis via de novo pathway; orotate from (S)-dihydroorotate (quinone route): step 1/1. Its function is as follows. Catalyzes the conversion of dihydroorotate to orotate with quinone as electron acceptor. This is Dihydroorotate dehydrogenase (quinone) from Xanthobacter autotrophicus (strain ATCC BAA-1158 / Py2).